The primary structure comprises 207 residues: Claudin-11 (207 aa).

Methionine 1 is a topological domain (cytoplasmic). Residues 2 to 22 (VATCLQVVGFVTSFVGWIGII) form a helical membrane-spanning segment. At 23–82 (VTTSTNDWVVTCGYTIPTCRKLDELGSKGLWADCVMATGLYHCKPLVDILILPGYVQACR) the chain is on the extracellular side. A helical membrane pass occupies residues 83 to 103 (ALMIAASVLGLPAILLLLTVL). Residues 104–122 (PCIRMGHEPGVAKYRRAQL) are Cytoplasmic-facing. A helical transmembrane segment spans residues 123-143 (AGVMLVLVALCAMVATIWFPV). The Extracellular segment spans residues 144–157 (CAHRETTIVSFGYS). The helical transmembrane segment at 158-178 (LYAGWIGAVLCLVGGCVIVCC) threads the bilayer. Over 179–207 (AGDAQAFGENRFYYSSGSSSPTHAKSAHV) the chain is Cytoplasmic. Phosphoserine is present on residues serine 193, serine 194, serine 197, and serine 198.

This sequence belongs to the claudin family. In terms of assembly, interacts with tetraspanin-3/TSPAN3. Interacts with OCLN.

It is found in the cell junction. The protein resides in the tight junction. It localises to the cell membrane. Plays a major role in tight junction-specific obliteration of the intercellular space, through calcium-independent cell-adhesion activity. In Bos taurus (Bovine), this protein is Claudin-11 (CLDN11).